We begin with the raw amino-acid sequence, 311 residues long: Peptide methionine sulfoxide reductase MsrA/MsrB 2 (311 aa).

The interval 1–155 is peptide methionine sulfoxide reductase A; the sequence is MHEIYLAGGC…PNGYCHINVN (155 aa). The active site involves cysteine 10. Residues 172-295 form the MsrB domain; it reads DEELKKTLSP…NSLSIRFIPK (124 aa). Cysteine 284 serves as the catalytic Nucleophile.

It in the N-terminal section; belongs to the MsrA Met sulfoxide reductase family. The protein in the C-terminal section; belongs to the MsrB Met sulfoxide reductase family.

It catalyses the reaction L-methionyl-[protein] + [thioredoxin]-disulfide + H2O = L-methionyl-(S)-S-oxide-[protein] + [thioredoxin]-dithiol. The catalysed reaction is [thioredoxin]-disulfide + L-methionine + H2O = L-methionine (S)-S-oxide + [thioredoxin]-dithiol. The enzyme catalyses L-methionyl-[protein] + [thioredoxin]-disulfide + H2O = L-methionyl-(R)-S-oxide-[protein] + [thioredoxin]-dithiol. Has an important function as a repair enzyme for proteins that have been inactivated by oxidation. Catalyzes the reversible oxidation-reduction of methionine sulfoxide in proteins to methionine. The chain is Peptide methionine sulfoxide reductase MsrA/MsrB 2 (msrAB2) from Streptococcus pneumoniae serotype 4 (strain ATCC BAA-334 / TIGR4).